Consider the following 159-residue polypeptide: Style cell-cycle inhibitor 1 (159 aa).

Residues 1-86 form a disordered region; it reads MVSERSSKEK…SDHKLKEGIP (86 aa). Over residues 15-50 the composition is skewed to basic and acidic residues; it reads ARSEDSSSSDYEEKVKRHRGTEKDDERRSRRSDKKD. Positions 51–63 are enriched in basic residues; sequence KKSHKHHKSSTSK. Positions 64–85 are enriched in basic and acidic residues; sequence KSKDDKPKKKHTESDHKLKEGI.

The protein localises to the nucleus. Component of the auxin signaling transduction pathway that regulates cell proliferation and differentiation during flowers stigmas and styles development. Involved in the regulation of auxin-related genes. In Arabidopsis thaliana (Mouse-ear cress), this protein is Style cell-cycle inhibitor 1.